The primary structure comprises 494 residues: Alpha-amylase-related protein (494 aa).

The first 20 residues, 1-20, serve as a signal peptide directing secretion; it reads MIKFALALTLCLAGASLSLA. Position 21 is a pyrrolidone carboxylic acid (Gln-21). Cys-48 and Cys-104 are joined by a disulfide. Residues Asn-118, Gln-169, and Asp-178 each coordinate Ca(2+). Cys-157 and Cys-171 form a disulfide bridge. Arg-206 contributes to the chloride binding site. Asp-208 serves as the catalytic Nucleophile. Position 212 (His-212) interacts with Ca(2+). Catalysis depends on Glu-245, which acts as the Proton donor. Chloride is bound by residues Asn-308 and Arg-343. 3 disulfide bridges follow: Cys-376/Cys-382, Cys-418/Cys-441, and Cys-448/Cys-460.

It belongs to the glycosyl hydrolase 13 family. Monomer. Ca(2+) is required as a cofactor. The cofactor is chloride.

The protein resides in the secreted. The catalysed reaction is Endohydrolysis of (1-&gt;4)-alpha-D-glucosidic linkages in polysaccharides containing three or more (1-&gt;4)-alpha-linked D-glucose units.. This chain is Alpha-amylase-related protein (Amyrel), found in Drosophila serrata (Fruit fly).